The sequence spans 129 residues: Small ribosomal subunit protein uS8 (129 aa).

This sequence belongs to the universal ribosomal protein uS8 family. Part of the 30S ribosomal subunit. Contacts proteins S5 and S12.

Its function is as follows. One of the primary rRNA binding proteins, it binds directly to 16S rRNA central domain where it helps coordinate assembly of the platform of the 30S subunit. This Mycoplasma capricolum subsp. capricolum (strain California kid / ATCC 27343 / NCTC 10154) protein is Small ribosomal subunit protein uS8.